Here is a 323-residue protein sequence, read N- to C-terminus: Probable pectate lyase A (323 aa).

The N-terminal stretch at 1–20 (MTNFKWIVAAAGLLSGQVLA) is a signal peptide. The N-linked (GlcNAc...) asparagine glycan is linked to Asn95. Asp136, Asp165, and Asp169 together coordinate Ca(2+). Arg222 is a catalytic residue.

This sequence belongs to the polysaccharide lyase 1 family. It depends on Ca(2+) as a cofactor.

Its subcellular location is the secreted. The catalysed reaction is Eliminative cleavage of (1-&gt;4)-alpha-D-galacturonan to give oligosaccharides with 4-deoxy-alpha-D-galact-4-enuronosyl groups at their non-reducing ends.. In terms of biological role, pectinolytic enzyme consist of four classes of enzymes: pectin lyase, polygalacturonase, pectin methylesterase and rhamnogalacturonase. Among pectinolytic enzymes, pectin lyase is the most important in depolymerization of pectin, since it cleaves internal glycosidic bonds of highly methylated pectins. Favors pectate, the anion, over pectin, the methyl ester. The polypeptide is Probable pectate lyase A (plyA) (Aspergillus niger (strain ATCC MYA-4892 / CBS 513.88 / FGSC A1513)).